We begin with the raw amino-acid sequence, 288 residues long: AA9 family lytic polysaccharide monooxygenase A (288 aa).

The first 22 residues, 1 to 22 (MKSTSATKFSVLAAATFAAAHG), serve as a signal peptide directing secretion. Cu(2+) contacts are provided by H21 and H104. 2 disulfide bridges follow: C74–C191 and C115–C119. N151 is a glycosylation site (N-linked (GlcNAc...) asparagine). 2 residues coordinate O2: H177 and Q186. Y188 contributes to the Cu(2+) binding site. A disordered region spans residues 236-270 (PEPYKSGSGSSDNAAEAVSSAAAEEPAAAATSAAA). Residues 249–270 (AAEAVSSAAAEEPAAAATSAAA) show a composition bias toward low complexity.

The protein belongs to the polysaccharide monooxygenase AA9 family. Requires Cu(2+) as cofactor.

The protein localises to the secreted. The enzyme catalyses [(1-&gt;4)-beta-D-glucosyl]n+m + reduced acceptor + O2 = 4-dehydro-beta-D-glucosyl-[(1-&gt;4)-beta-D-glucosyl]n-1 + [(1-&gt;4)-beta-D-glucosyl]m + acceptor + H2O.. Its function is as follows. Lytic polysaccharide monooxygenase (LPMO) that depolymerizes crystalline and amorphous polysaccharides via the oxidation of scissile alpha- or beta-(1-4)-glycosidic bonds, yielding C1 and C4 oxidation products. Catalysis by LPMOs requires the reduction of the active-site copper from Cu(II) to Cu(I) by a reducing agent and H(2)O(2) or O(2) as a cosubstrate. Active on cellulose and on xyloglucan for deconstruction of plant biomass. This is AA9 family lytic polysaccharide monooxygenase A from Geotrichum candidum (Oospora lactis).